Consider the following 435-residue polypeptide: Methylenetetrahydrofolate--tRNA-(uracil-5-)-methyltransferase TrmFO (435 aa).

10–15 (GAGLAG) lines the FAD pocket.

The protein belongs to the MnmG family. TrmFO subfamily. It depends on FAD as a cofactor.

It localises to the cytoplasm. It catalyses the reaction uridine(54) in tRNA + (6R)-5,10-methylene-5,6,7,8-tetrahydrofolate + NADH + H(+) = 5-methyluridine(54) in tRNA + (6S)-5,6,7,8-tetrahydrofolate + NAD(+). The enzyme catalyses uridine(54) in tRNA + (6R)-5,10-methylene-5,6,7,8-tetrahydrofolate + NADPH + H(+) = 5-methyluridine(54) in tRNA + (6S)-5,6,7,8-tetrahydrofolate + NADP(+). Functionally, catalyzes the folate-dependent formation of 5-methyl-uridine at position 54 (M-5-U54) in all tRNAs. This is Methylenetetrahydrofolate--tRNA-(uracil-5-)-methyltransferase TrmFO from Bacillus velezensis (strain DSM 23117 / BGSC 10A6 / LMG 26770 / FZB42) (Bacillus amyloliquefaciens subsp. plantarum).